A 260-amino-acid polypeptide reads, in one-letter code: Lipid II isoglutaminyl synthase (glutamine-hydrolyzing) subunit GatD (260 aa).

The 199-residue stretch at 16–214 (QLNIAHLYGN…FHGPILSRNA (199 aa)) folds into the GATase cobBQ-type domain. Catalysis depends on cysteine 107, which acts as the Nucleophile. Residue arginine 142 participates in substrate binding. Residue histidine 206 is part of the active site.

The protein belongs to the CobB/CobQ family. GatD subfamily. As to quaternary structure, forms a heterodimer with MurT.

It carries out the reaction beta-D-GlcNAc-(1-&gt;4)-Mur2Ac(oyl-L-Ala-gamma-D-Glu-L-Lys-D-Ala-D-Ala)-di-trans,octa-cis-undecaprenyl diphosphate + L-glutamine + ATP + H2O = beta-D-GlcNAc-(1-&gt;4)-Mur2Ac(oyl-L-Ala-D-isoglutaminyl-L-Lys-D-Ala-D-Ala)-di-trans,octa-cis-undecaprenyl diphosphate + L-glutamate + ADP + phosphate + H(+). The enzyme catalyses L-glutamine + H2O = L-glutamate + NH4(+). It functions in the pathway cell wall biogenesis; peptidoglycan biosynthesis. Its function is as follows. The lipid II isoglutaminyl synthase complex catalyzes the formation of alpha-D-isoglutamine in the cell wall lipid II stem peptide. The GatD subunit catalyzes the hydrolysis of glutamine to glutamate and ammonia. The resulting ammonia molecule is channeled to the active site of MurT. The sequence is that of Lipid II isoglutaminyl synthase (glutamine-hydrolyzing) subunit GatD from Streptococcus pneumoniae (strain ATCC BAA-255 / R6).